Here is a 496-residue protein sequence, read N- to C-terminus: Inosine-5'-monophosphate dehydrogenase (496 aa).

2 consecutive CBS domains span residues valine 96 to valine 152 and methionine 156 to alanine 212. NAD(+)-binding positions include aspartate 247 and glycine 299 to glycine 301. Glycine 301 and glycine 303 together coordinate K(+). Serine 304 contacts IMP. Cysteine 306 serves as a coordination point for K(+). Cysteine 306 (thioimidate intermediate) is an active-site residue. IMP contacts are provided by residues aspartate 339–glycine 341, glycine 362–serine 363, and tyrosine 386–glycine 390. Arginine 405 functions as the Proton acceptor in the catalytic mechanism. Glutamate 423 contributes to the IMP binding site. K(+) contacts are provided by glutamate 477, serine 478, and histidine 479.

The protein belongs to the IMPDH/GMPR family. Homotetramer. It depends on K(+) as a cofactor.

It catalyses the reaction IMP + NAD(+) + H2O = XMP + NADH + H(+). It participates in purine metabolism; XMP biosynthesis via de novo pathway; XMP from IMP: step 1/1. Mycophenolic acid (MPA) is a non-competitive inhibitor that prevents formation of the closed enzyme conformation by binding to the same site as the amobile flap. In contrast, mizoribine monophosphate (MZP) is a competitive inhibitor that induces the closed conformation. MPA is a potent inhibitor of mammalian IMPDHs but a poor inhibitor of the bacterial enzymes. MZP is a more potent inhibitor of bacterial IMPDH. Its function is as follows. Catalyzes the conversion of inosine 5'-phosphate (IMP) to xanthosine 5'-phosphate (XMP), the first committed and rate-limiting step in the de novo synthesis of guanine nucleotides, and therefore plays an important role in the regulation of cell growth. This is Inosine-5'-monophosphate dehydrogenase from Methanocaldococcus jannaschii (strain ATCC 43067 / DSM 2661 / JAL-1 / JCM 10045 / NBRC 100440) (Methanococcus jannaschii).